Reading from the N-terminus, the 73-residue chain is uncharacterized protein (73 aa).

A helical transmembrane segment spans residues 54-72 (VSFIVAPTVMQVQCLFFFI).

The protein localises to the membrane. This is an uncharacterized protein from Saccharomyces cerevisiae (strain ATCC 204508 / S288c) (Baker's yeast).